A 177-amino-acid chain; its full sequence is ATP synthase subunit b (177 aa).

The helical transmembrane segment at 19 to 39 threads the bilayer; the sequence is LFPNLPNFIAHVIATIVLVVI.

Belongs to the ATPase B chain family. In terms of assembly, F-type ATPases have 2 components, F(1) - the catalytic core - and F(0) - the membrane proton channel. F(1) has five subunits: alpha(3), beta(3), gamma(1), delta(1), epsilon(1). F(0) has three main subunits: a(1), b(2) and c(10-14). The alpha and beta chains form an alternating ring which encloses part of the gamma chain. F(1) is attached to F(0) by a central stalk formed by the gamma and epsilon chains, while a peripheral stalk is formed by the delta and b chains.

The protein resides in the cell membrane. Its function is as follows. F(1)F(0) ATP synthase produces ATP from ADP in the presence of a proton or sodium gradient. F-type ATPases consist of two structural domains, F(1) containing the extramembraneous catalytic core and F(0) containing the membrane proton channel, linked together by a central stalk and a peripheral stalk. During catalysis, ATP synthesis in the catalytic domain of F(1) is coupled via a rotary mechanism of the central stalk subunits to proton translocation. Component of the F(0) channel, it forms part of the peripheral stalk, linking F(1) to F(0). This is ATP synthase subunit b from Mesoplasma florum (strain ATCC 33453 / NBRC 100688 / NCTC 11704 / L1) (Acholeplasma florum).